The primary structure comprises 191 residues: Clusterin (191 aa).

Residues asparagine 79, asparagine 116, asparagine 142, and asparagine 162 are each glycosylated (N-linked (GlcNAc...) asparagine). Serine 184 bears the Phosphoserine mark.

This sequence belongs to the clusterin family. As to quaternary structure, antiparallel disulfide-linked heterodimer of an alpha chain and a beta chain. Self-associates and forms higher oligomers. Interacts with a broad range of misfolded proteins, including APP, APOC2 and LYZ. Slightly acidic pH promotes interaction with misfolded proteins. Forms high-molecular weight oligomers upon interaction with misfolded proteins. Interacts with APOA1, LRP2, CLUAP1 and PON1. Interacts with the complement membrane attack complex. Interacts (via alpha chain) with XRCC6. Interacts with SYVN1, COMMD1, BTRC, CUL1 and with ubiquitin and SCF (SKP1-CUL1-F-box protein) E3 ubiquitin-protein ligase complexes. Interacts (via alpha chain) with BAX in stressed cells, where BAX undergoes a conformation change leading to association with the mitochondrial membrane. Does not interact with BAX in unstressed cells. Found in a complex with LTF, CLU, EPPIN and SEMG1. Interacts (immaturely glycosylated pre-secreted form) with HSPA5; this interaction promotes CLU stability and facilitates stress-induced CLU retrotranslocation from the secretory pathway to the mitochondria, thereby reducing stress-induced apoptosis by stabilizing mitochondrial membrane integrity. Interacts with BCL2L1; this interaction releases and activates BAX and promotes cell death. Interacts with TGFBR2 and ACVR1. Interacts (secreted form) with STMN3; this interaction may act as an important modulator during neuronal differentiation. Post-translationally, proteolytically cleaved on its way through the secretory system, probably within the Golgi lumen. Proteolytic cleavage is not necessary for its chaperone activity. All non-secreted forms are not proteolytically cleaved. Chaperone activity of uncleaved forms is dependent on a non-reducing environment. Polyubiquitinated, leading to proteasomal degradation. Under cellular stress, the intracellular level of cleaved form is reduced due to proteasomal degradation. In terms of processing, heavily N-glycosylated. About 30% of the protein mass is comprised of complex N-linked carbohydrate. Endoplasmic reticulum (ER) stress induces changes in glycosylation status and increases level of hypoglycosylated forms. Core carbohydrates are essential for chaperone activity. Non-secreted forms are hypoglycosylated or unglycosylated.

The protein resides in the secreted. Its subcellular location is the nucleus. It localises to the cytoplasm. The protein localises to the mitochondrion membrane. It is found in the cytosol. The protein resides in the microsome. Its subcellular location is the endoplasmic reticulum. It localises to the mitochondrion. The protein localises to the perinuclear region. It is found in the cytoplasmic vesicle. The protein resides in the secretory vesicle. Its subcellular location is the chromaffin granule. Functions as extracellular chaperone that prevents aggregation of non native proteins. Prevents stress-induced aggregation of blood plasma proteins. Inhibits formation of amyloid fibrils by APP, APOC2, B2M, CALCA, CSN3, SNCA and aggregation-prone LYZ variants (in vitro). Does not require ATP. Maintains partially unfolded proteins in a state appropriate for subsequent refolding by other chaperones, such as HSPA8/HSC70. Does not refold proteins by itself. Binding to cell surface receptors triggers internalization of the chaperone-client complex and subsequent lysosomal or proteasomal degradation. When secreted, protects cells against apoptosis and against cytolysis by complement: inhibits assembly of the complement membrane attack complex (MAC) by preventing polymerization of C9 pore component of the MAC complex. Intracellular forms interact with ubiquitin and SCF (SKP1-CUL1-F-box protein) E3 ubiquitin-protein ligase complexes and promote the ubiquitination and subsequent proteasomal degradation of target proteins. Promotes proteasomal degradation of COMMD1 and IKBKB. Modulates NF-kappa-B transcriptional activity. Following stress, promotes apoptosis. Inhibits apoptosis when associated with the mitochondrial membrane by interference with BAX-dependent release of cytochrome c into the cytoplasm. Plays a role in the regulation of cell proliferation. An intracellular form suppresses stress-induced apoptosis by stabilizing mitochondrial membrane integrity through interaction with HSPA5. Secreted form does not affect caspase or BAX-mediated intrinsic apoptosis and TNF-induced NF-kappa-B-activity. Secreted form act as an important modulator during neuronal differentiation through interaction with STMN3. Plays a role in the clearance of immune complexes that arise during cell injury. This chain is Clusterin, found in Mesocricetus auratus (Golden hamster).